A 520-amino-acid chain; its full sequence is MTETAASSAERVLIFDTTLRDGEQCPGATMTFEEKLAVAEMLDGMGVDIIEAGFPIASNGDFDAVAEIARRTKTSVVAGLARAISADIARAGEAVRLAKRGRIHTFVSTSPIHLAHQMRKSEEEVLEIIQKTVAQARDLVEDVEWSAMDATRTPIDYLCRCVEMAIKMGATTINLPDTVGYATPDEYRAMFRSVRERVPNADRAIFSVHCHNDLGLAIANSLAGIEGGARQVECTINGIGERAGNAALEEVVMALRTRADVLPYTTGIDTTQIMRASKLVAAATHFPVQYNKAVVGRNAFAHESGIHQDGMLKNQSTYEIMTPESVGVQKTSLVMGKHSGRAAFRSKLEELGYRLSDNQFQDAFERFKALADRKKNVYDEDIEALVDENLATAHDRIRLLSLTVIAGTRGPQRATMRLDIDGRQATEEADGNGPVDAVFNAIHALVPHEAKLELYDVHAVTEGTDAQAEVSVRLRQGERSVTARGADPDTLVASAKAYLAALNKLLAGANRLHAQHAAAE.

The Pyruvate carboxyltransferase domain maps to 12 to 274 (VLIFDTTLRD…TTGIDTTQIM (263 aa)). Mn(2+) is bound by residues Asp-21, His-209, His-211, and Asn-245. Residues 398–520 (RLLSLTVIAG…RLHAQHAAAE (123 aa)) form a regulatory domain region.

Belongs to the alpha-IPM synthase/homocitrate synthase family. LeuA type 1 subfamily. In terms of assembly, homodimer. Mn(2+) is required as a cofactor.

It is found in the cytoplasm. The catalysed reaction is 3-methyl-2-oxobutanoate + acetyl-CoA + H2O = (2S)-2-isopropylmalate + CoA + H(+). The protein operates within amino-acid biosynthesis; L-leucine biosynthesis; L-leucine from 3-methyl-2-oxobutanoate: step 1/4. Its function is as follows. Catalyzes the condensation of the acetyl group of acetyl-CoA with 3-methyl-2-oxobutanoate (2-ketoisovalerate) to form 3-carboxy-3-hydroxy-4-methylpentanoate (2-isopropylmalate). In Methylobacterium nodulans (strain LMG 21967 / CNCM I-2342 / ORS 2060), this protein is 2-isopropylmalate synthase.